The following is a 443-amino-acid chain: Probable D-serine dehydratase (443 aa).

Position 118 is an N6-(pyridoxal phosphate)lysine (lysine 118).

The protein belongs to the serine/threonine dehydratase family. DsdA subfamily. It depends on pyridoxal 5'-phosphate as a cofactor.

The catalysed reaction is D-serine = pyruvate + NH4(+). The protein is Probable D-serine dehydratase of Colwellia psychrerythraea (strain 34H / ATCC BAA-681) (Vibrio psychroerythus).